The chain runs to 359 residues: Putative nucleotidyltransferase MAB21L1 (359 aa).

Residues 23 to 24 and 63 to 66 contribute to the a ribonucleoside 5'-triphosphate site; these read RK and FEGL. The Mg(2+) site is built by glutamate 73 and glutamate 75. A ribonucleoside 5'-triphosphate-binding positions include lysine 248 and 252 to 255; that span reads SLLK.

Belongs to the mab-21 family. In terms of assembly, monomer. Homodecamer; composed of 2 back to back homopentamers. The protein may exist as monomer in solution and oiligomerizes upon ligand binding.

Its subcellular location is the nucleus. In terms of biological role, putative nucleotidyltransferase required for several aspects of embryonic development including normal development of the eye. It is unclear whether it displays nucleotidyltransferase activity in vivo. Binds single-stranded RNA (ssRNA). This chain is Putative nucleotidyltransferase MAB21L1 (mab21l1), found in Danio rerio (Zebrafish).